We begin with the raw amino-acid sequence, 219 residues long: 2-C-methyl-D-erythritol 4-phosphate cytidylyltransferase (219 aa).

Belongs to the IspD/TarI cytidylyltransferase family. IspD subfamily.

It catalyses the reaction 2-C-methyl-D-erythritol 4-phosphate + CTP + H(+) = 4-CDP-2-C-methyl-D-erythritol + diphosphate. It functions in the pathway isoprenoid biosynthesis; isopentenyl diphosphate biosynthesis via DXP pathway; isopentenyl diphosphate from 1-deoxy-D-xylulose 5-phosphate: step 2/6. Catalyzes the formation of 4-diphosphocytidyl-2-C-methyl-D-erythritol from CTP and 2-C-methyl-D-erythritol 4-phosphate (MEP). This is 2-C-methyl-D-erythritol 4-phosphate cytidylyltransferase from Phocaeicola vulgatus (strain ATCC 8482 / DSM 1447 / JCM 5826 / CCUG 4940 / NBRC 14291 / NCTC 11154) (Bacteroides vulgatus).